Reading from the N-terminus, the 197-residue chain is Small ribosomal subunit protein uS4B (197 aa).

In terms of domain architecture, S4 RNA-binding spans 88–150; the sequence is SRLDNMVYRM…SRKTEMFVNN (63 aa).

Belongs to the universal ribosomal protein uS4 family. In terms of assembly, part of the 30S ribosomal subunit. Contacts protein S5. The interaction surface between S4 and S5 is involved in control of translational fidelity.

Its function is as follows. One of the primary rRNA binding proteins, it binds directly to 16S rRNA where it nucleates assembly of the body of the 30S subunit. Functionally, with S5 and S12 plays an important role in translational accuracy. The sequence is that of Small ribosomal subunit protein uS4B from Clostridium perfringens (strain SM101 / Type A).